The primary structure comprises 530 residues: Glutamate--tRNA ligase (530 aa).

The 'HIGH' region signature appears at 26–36 (PSPTGKAHIGT). The 'KMSKS' region motif lies at 267-271 (KLSKR). Lys270 serves as a coordination point for ATP.

Belongs to the class-I aminoacyl-tRNA synthetase family. Glutamate--tRNA ligase type 1 subfamily. As to quaternary structure, monomer.

Its subcellular location is the cytoplasm. The enzyme catalyses tRNA(Glu) + L-glutamate + ATP = L-glutamyl-tRNA(Glu) + AMP + diphosphate. Its function is as follows. Catalyzes the attachment of glutamate to tRNA(Glu) in a two-step reaction: glutamate is first activated by ATP to form Glu-AMP and then transferred to the acceptor end of tRNA(Glu). This is Glutamate--tRNA ligase from Gloeobacter violaceus (strain ATCC 29082 / PCC 7421).